We begin with the raw amino-acid sequence, 540 residues long: Putative cysteine ligase BshC (540 aa).

A coiled-coil region spans residues 457 to 477; the sequence is EKNRAFIQGQIAFLKERMERE.

Belongs to the BshC family.

Involved in bacillithiol (BSH) biosynthesis. May catalyze the last step of the pathway, the addition of cysteine to glucosamine malate (GlcN-Mal) to generate BSH. The protein is Putative cysteine ligase BshC of Shouchella clausii (strain KSM-K16) (Alkalihalobacillus clausii).